Consider the following 327-residue polypeptide: Trypsin-like protease try-5 (327 aa).

The first 21 residues, 1 to 21 (MRPRIIVFLFQVLVVIKGTKL), serve as a signal peptide directing secretion. A Peptidase S1 domain is found at 43-327 (AAGNTGNPTH…KFIVNFINQA (285 aa)). C73 and C89 are disulfide-bonded. Residues H88 and D173 each act as charge relay system in the active site. N207 is a glycosylation site (N-linked (GlcNAc...) asparagine). Disulfide bonds link C242/C256 and C266/C296. S270 acts as the Charge relay system in catalysis.

It belongs to the peptidase S1 family. Specifically expressed in the male gonad including the seminal vesicle, the valve region and the vas deferens.

The protein localises to the secreted. It localises to the cytoplasmic vesicle. The protein resides in the secretory vesicle lumen. Its activity is regulated as follows. In the male gonad, probably maintained inactive by swm-1. Its function is as follows. Serine protease which, in males, acts as a promoting signal during mating to activate sperm. In Caenorhabditis elegans, this protein is Trypsin-like protease try-5.